The primary structure comprises 631 residues: ATP-dependent zinc metalloprotease FtsH (631 aa).

Topologically, residues 1–2 (MK) are stromal. The helical transmembrane segment at 3-23 (ISWKNILLTLIPLGLISFLVW) threads the bilayer. At 24–118 (QGFNNTTNPQ…AHATNDSTPA (95 aa)) the chain is on the lumenal side. Residues 119–139 (WSLIGNLIFPILLIAGLAFLF) traverse the membrane as a helical segment. The Stromal segment spans residues 140-631 (RRSSNLPGGP…IDYKSQLKST (492 aa)). Residue 213–220 (GPPGTGKT) participates in ATP binding. Position 434 (histidine 434) interacts with Zn(2+). Residue glutamate 435 is part of the active site. Histidine 438 and aspartate 512 together coordinate Zn(2+).

It in the central section; belongs to the AAA ATPase family. In the C-terminal section; belongs to the peptidase M41 family. In terms of assembly, homohexamer. Requires Zn(2+) as cofactor.

Its subcellular location is the plastid. The protein resides in the chloroplast thylakoid membrane. Functionally, acts as a processive, ATP-dependent zinc metallopeptidase. The protein is ATP-dependent zinc metalloprotease FtsH of Guillardia theta (Cryptophyte).